The following is a 403-amino-acid chain: Poly(rC)-binding protein 4 (403 aa).

3 consecutive KH domains span residues 17 to 67, 101 to 154, and 241 to 293; these read TLTL…TITG, PVTL…TVSG, and TSSQ…TITG.

It is found in the cytoplasm. Functionally, single-stranded nucleic acid binding protein that binds preferentially to oligo dC. This chain is Poly(rC)-binding protein 4 (PCBP4), found in Bos taurus (Bovine).